The primary structure comprises 473 residues: Ribulose bisphosphate carboxylase large chain (473 aa).

The propeptide occupies 1–2 (MS). Pro3 carries the N-acetylproline modification. The residue at position 14 (Lys14) is an N6,N6,N6-trimethyllysine. Substrate contacts are provided by Asn123 and Thr173. Lys175 functions as the Proton acceptor in the catalytic mechanism. Lys177 provides a ligand contact to substrate. Mg(2+)-binding residues include Lys201, Asp203, and Glu204. N6-carboxylysine is present on Lys201. The active-site Proton acceptor is His294. Substrate contacts are provided by Arg295, His327, and Ser379.

Belongs to the RuBisCO large chain family. Type I subfamily. In terms of assembly, heterohexadecamer of 8 large chains and 8 small chains; disulfide-linked. The disulfide link is formed within the large subunit homodimers. Mg(2+) serves as cofactor. Post-translationally, the disulfide bond which can form in the large chain dimeric partners within the hexadecamer appears to be associated with oxidative stress and protein turnover.

It localises to the plastid. It is found in the chloroplast. It carries out the reaction 2 (2R)-3-phosphoglycerate + 2 H(+) = D-ribulose 1,5-bisphosphate + CO2 + H2O. The enzyme catalyses D-ribulose 1,5-bisphosphate + O2 = 2-phosphoglycolate + (2R)-3-phosphoglycerate + 2 H(+). In terms of biological role, ruBisCO catalyzes two reactions: the carboxylation of D-ribulose 1,5-bisphosphate, the primary event in carbon dioxide fixation, as well as the oxidative fragmentation of the pentose substrate in the photorespiration process. Both reactions occur simultaneously and in competition at the same active site. The chain is Ribulose bisphosphate carboxylase large chain from Monarda didyma (Scarlet bee-balm).